The primary structure comprises 379 residues: MERIYLDHAATSPMDERVLEQMIPHFSGSFGNPSSIHSFGRESRKWVDEARAQIAAEIGAAEQEIIFTSGGTEADNLAIMGTALARKDLGRHIITTKIEHHAVLHTCEKLEGDGFDITYLDVDQNGRVSAKQVKEALRDDTILVTVMYGNNEVGTVQPIEEIGELLKEHKAYFHTDAVQAFGLLPIDVKNSHIDLLSVSGHKLNGPKGTGFLYASKDVKLSPLLFGGEQERKRRAGTENVPGIVGLKEAIKLSSEERDEKNEKYQSFKAIFADTLRDAGVAFEVNGDKEHSLPHVLNLYFPGVSVEALLVNLDMAGVAVSSGSACTAGSVLPSHVLTAMFGEESDRLTSSIRISFGLGNTAEQVKTAAKHVADVVKRLT.

Pyridoxal 5'-phosphate-binding positions include 71–72, asparagine 151, glutamine 179, and 199–201; these read GT and SGH. The residue at position 202 (lysine 202) is an N6-(pyridoxal phosphate)lysine. Threonine 237 contacts pyridoxal 5'-phosphate. Catalysis depends on cysteine 325, which acts as the Cysteine persulfide intermediate. Cysteine 325 serves as a coordination point for [2Fe-2S] cluster.

The protein belongs to the class-V pyridoxal-phosphate-dependent aminotransferase family. NifS/IscS subfamily. The cofactor is pyridoxal 5'-phosphate.

The enzyme catalyses (sulfur carrier)-H + L-cysteine = (sulfur carrier)-SH + L-alanine. Functionally, catalyzes the removal of elemental sulfur from cysteine to produce alanine. The polypeptide is Putative cysteine desulfurase IscS 1 (iscS1) (Bacillus subtilis (strain 168)).